The primary structure comprises 117 residues: Large ribosomal subunit protein bL20c (117 aa).

Belongs to the bacterial ribosomal protein bL20 family.

Its subcellular location is the plastid. The protein resides in the chloroplast. Functionally, binds directly to 23S ribosomal RNA and is necessary for the in vitro assembly process of the 50S ribosomal subunit. It is not involved in the protein synthesizing functions of that subunit. The polypeptide is Large ribosomal subunit protein bL20c (Vitis vinifera (Grape)).